Here is a 433-residue protein sequence, read N- to C-terminus: 5-methylthioadenosine/S-adenosylhomocysteine deaminase (433 aa).

Zn(2+) contacts are provided by His67 and His69. Substrate-binding residues include Glu96, Arg148, and His187. A Zn(2+)-binding site is contributed by His214. The substrate site is built by Glu217 and Asp302. Position 302 (Asp302) interacts with Zn(2+).

This sequence belongs to the metallo-dependent hydrolases superfamily. MTA/SAH deaminase family. The cofactor is Zn(2+).

The catalysed reaction is S-adenosyl-L-homocysteine + H2O + H(+) = S-inosyl-L-homocysteine + NH4(+). The enzyme catalyses S-methyl-5'-thioadenosine + H2O + H(+) = S-methyl-5'-thioinosine + NH4(+). Its function is as follows. Catalyzes the deamination of 5-methylthioadenosine and S-adenosyl-L-homocysteine into 5-methylthioinosine and S-inosyl-L-homocysteine, respectively. Is also able to deaminate adenosine. This is 5-methylthioadenosine/S-adenosylhomocysteine deaminase from Carboxydothermus hydrogenoformans (strain ATCC BAA-161 / DSM 6008 / Z-2901).